Here is a 624-residue protein sequence, read N- to C-terminus: Phosphomethylpyrimidine synthase (624 aa).

The interval 48–70 is disordered; sequence SDTHTSQGREKNPPLTVYDTSGP. Substrate-binding positions include Asn-229, Met-258, Tyr-287, His-323, 343-345, 384-387, and Glu-423; these read SRG and DGLR. His-427 lines the Zn(2+) pocket. Tyr-450 contributes to the substrate binding site. His-491 contributes to the Zn(2+) binding site. Positions 571, 574, and 579 each coordinate [4Fe-4S] cluster.

This sequence belongs to the ThiC family. Homodimer. [4Fe-4S] cluster serves as cofactor.

It catalyses the reaction 5-amino-1-(5-phospho-beta-D-ribosyl)imidazole + S-adenosyl-L-methionine = 4-amino-2-methyl-5-(phosphooxymethyl)pyrimidine + CO + 5'-deoxyadenosine + formate + L-methionine + 3 H(+). It functions in the pathway cofactor biosynthesis; thiamine diphosphate biosynthesis. Catalyzes the synthesis of the hydroxymethylpyrimidine phosphate (HMP-P) moiety of thiamine from aminoimidazole ribotide (AIR) in a radical S-adenosyl-L-methionine (SAM)-dependent reaction. This is Phosphomethylpyrimidine synthase from Nitrosococcus oceani (strain ATCC 19707 / BCRC 17464 / JCM 30415 / NCIMB 11848 / C-107).